We begin with the raw amino-acid sequence, 172 residues long: Austinoid biosynthesis clusters protein J (172 aa).

The protein belongs to the trt14 isomerase family. As to quaternary structure, homodimer.

It functions in the pathway secondary metabolite biosynthesis; terpenoid biosynthesis. Part of the gene cluster B that mediates the biosynthesis of the fungal meroterpenoid acetoxydehydroaustin. The first step of the pathway is the synthesis of 3,5-dimethylorsellinic acid by the polyketide synthase ausA. 3,5-dimethylorsellinic acid is then prenylated by the polyprenyl transferase ausN. Further epoxidation by the FAD-dependent monooxygenase ausM and cyclization by the probable terpene cyclase ausL lead to the formation of protoaustinoid A. Protoaustinoid A is then oxidized to spiro-lactone preaustinoid A3 by the combined action of the FAD-binding monooxygenases ausB and ausC, and the dioxygenase ausE. Acid-catalyzed keto-rearrangement and ring contraction of the tetraketide portion of preaustinoid A3 by ausJ lead to the formation of preaustinoid A4. The aldo-keto reductase ausK, with the help of ausH, is involved in the next step by transforming preaustinoid A4 into isoaustinone which is in turn hydroxylated by the P450 monooxygenase ausI to form austinolide. The cytochrome P450 monooxygenase ausG then modifies austinolide to austinol. Austinol is further acetylated to austin by the O-acetyltransferase ausP, which spontaneously changes to dehydroaustin. The cytochrome P450 monooxygenase then converts dehydroaustin is into 7-dehydrodehydroaustin. The hydroxylation catalyzed by ausR permits the second O-acetyltransferase ausQ to add an additional acetyl group to the molecule, leading to the formation of acetoxydehydroaustin. Due to genetic rearrangements of the clusters and the subsequent loss of some enzymes, the end product of the Penicillium brasilianum austinoid biosynthesis clusters is acetoxydehydroaustin. The protein is Austinoid biosynthesis clusters protein J of Penicillium brasilianum.